We begin with the raw amino-acid sequence, 374 residues long: MNFNKLKFGATIGIIGGGQLGKMMAQSAQKMGYKVAVLDPAEDCPCRYVAHEFIQAKYDDEKALNQLGQKCDVITYEFENISAQQLKLLCEKYNIPQGYQAIQLLQDRLTEKETLKSAGTKVVPFISVKESKDIDKAIETLGYPFIVKTRFGGYDGKGQVLINNEKDLQEGIKLIETSECVAEKYLNIKKEVSLTVTRGNNNQITYFPLQENEHRNQILFKTIVPARIDKIAEAKEQVNKIIQSIHFIGTFTVEFFIDSNNQLYVNEIAPRPHNSGHYSIEACDYSQFDTHILAVTGQSLPNSIELLKPAVMMNLLGKDLDLLENEFNEHPEWHLHIYGKSERKDSRKMGHMTVLTNDVNQTEQDMYAKFEGSN.

ATP-binding positions include arginine 108, lysine 148, glycine 153–glutamine 159, glutamate 183–leucine 186, glutamate 191, histidine 214, and asparagine 266–glutamate 267. The ATP-grasp domain occupies lysine 112–threonine 296.

The protein belongs to the PurK/PurT family. As to quaternary structure, homodimer.

It catalyses the reaction 5-amino-1-(5-phospho-beta-D-ribosyl)imidazole + hydrogencarbonate + ATP = 5-carboxyamino-1-(5-phospho-D-ribosyl)imidazole + ADP + phosphate + 2 H(+). Its pathway is purine metabolism; IMP biosynthesis via de novo pathway; 5-amino-1-(5-phospho-D-ribosyl)imidazole-4-carboxylate from 5-amino-1-(5-phospho-D-ribosyl)imidazole (N5-CAIR route): step 1/2. Catalyzes the ATP-dependent conversion of 5-aminoimidazole ribonucleotide (AIR) and HCO(3)(-) to N5-carboxyaminoimidazole ribonucleotide (N5-CAIR). This chain is N5-carboxyaminoimidazole ribonucleotide synthase, found in Staphylococcus aureus (strain MRSA252).